The following is a 243-amino-acid chain: Complement C1q tumor necrosis factor-related protein 5 (243 aa).

An N-terminal signal peptide occupies residues 1–15 (MRPLLALLLLGLASG). Residues 15 to 124 (GSPPLDDNKI…VPPPADTPLP (110 aa)) are disordered. One can recognise a Collagen-like domain in the interval 30-95 (GQPGLPGTPG…AGPVGAIGPA (66 aa)). The 140-residue stretch at 99–238 (SVPPRSAFSA…GFLVYSDWHS (140 aa)) folds into the C1q domain.

In terms of assembly, homotrimer (via collagen-like domain). May form higher order oligomers by supercoiling of the trimers. May interact with ERFE.

The protein resides in the secreted. The protein is Complement C1q tumor necrosis factor-related protein 5 (C1qtnf5) of Rattus norvegicus (Rat).